Reading from the N-terminus, the 226-residue chain is Endonuclease NucS (226 aa).

Belongs to the NucS endonuclease family.

The protein localises to the cytoplasm. Its function is as follows. Cleaves both 3' and 5' ssDNA extremities of branched DNA structures. The chain is Endonuclease NucS from Mycobacterium ulcerans (strain Agy99).